The following is a 236-amino-acid chain: Small ribosomal subunit protein uS3 (236 aa).

In terms of domain architecture, KH type-2 spans 39–107; it reads IRLYVLEELK…ETSLNIVEIH (69 aa). Residues 216–236 are disordered; sequence ERRAAEVDHSGSSSNRRRENA.

The protein belongs to the universal ribosomal protein uS3 family. In terms of assembly, part of the 30S ribosomal subunit. Forms a tight complex with proteins S10 and S14.

Binds the lower part of the 30S subunit head. Binds mRNA in the 70S ribosome, positioning it for translation. This is Small ribosomal subunit protein uS3 from Bartonella henselae (strain ATCC 49882 / DSM 28221 / CCUG 30454 / Houston 1) (Rochalimaea henselae).